We begin with the raw amino-acid sequence, 47 residues long: QAIGLPHTACIQCNRKTSSKCLSGQICLPYHMTCYTLYKPDENGELK.

Pyrrolidone carboxylic acid is present on Q1. 2 disulfide bridges follow: C10-C34 and C13-C21.

In terms of assembly, monomer. In terms of tissue distribution, expressed by the venom gland.

It is found in the secreted. In terms of biological role, this toxin may inhibit nicotinic acetylcholine receptor (nAChR). It has poorly reversible postsynaptic blocking activity in a chick muscle preparation and readily reversible inhibitory activity at a presynaptic site in the rat vas deferens prostatic segment most likely to prevent the release of neurotransmitters. This Boiga dendrophila (Mangrove snake) protein is Boigatoxin-A.